Reading from the N-terminus, the 116-residue chain is Small ribosomal subunit protein uS10m (116 aa).

The protein belongs to the universal ribosomal protein uS10 family.

The protein localises to the mitochondrion. This is Small ribosomal subunit protein uS10m (RPS10) from Reclinomonas americana.